Consider the following 113-residue polypeptide: T cell receptor alpha variable 8-4 (113 aa).

The first 20 residues, 1–20 (MLLLLVPVLEVIFTLGGTRA), serve as a signal peptide directing secretion. One can recognise an Ig-like domain in the interval 21–113 (QSVTQLGSHV…DAAEYFCAVS (93 aa)). The cysteines at positions 42 and 110 are disulfide-linked. N-linked (GlcNAc...) asparagine glycosylation is present at Asn43.

In terms of assembly, alpha-beta TR is a heterodimer composed of an alpha and beta chain; disulfide-linked. The alpha-beta TR is associated with the transmembrane signaling CD3 coreceptor proteins to form the TR-CD3 (TcR or TCR). The assembly of alpha-beta TR heterodimers with CD3 occurs in the endoplasmic reticulum where a single alpha-beta TR heterodimer associates with one CD3D-CD3E heterodimer, one CD3G-CD3E heterodimer and one CD247 homodimer forming a stable octameric structure. CD3D-CD3E and CD3G-CD3E heterodimers preferentially associate with TR alpha and TR beta chains, respectively. The association of the CD247 homodimer is the last step of TcR assembly in the endoplasmic reticulum and is required for transport to the cell surface.

The protein localises to the cell membrane. Its function is as follows. V region of the variable domain of T cell receptor (TR) alpha chain that participates in the antigen recognition. Alpha-beta T cell receptors are antigen specific receptors which are essential to the immune response and are present on the cell surface of T lymphocytes. Recognize peptide-major histocompatibility (MH) (pMH) complexes that are displayed by antigen presenting cells (APC), a prerequisite for efficient T cell adaptive immunity against pathogens. Binding of alpha-beta TR to pMH complex initiates TR-CD3 clustering on the cell surface and intracellular activation of LCK that phosphorylates the ITAM motifs of CD3G, CD3D, CD3E and CD247 enabling the recruitment of ZAP70. In turn ZAP70 phosphorylates LAT, which recruits numerous signaling molecules to form the LAT signalosome. The LAT signalosome propagates signal branching to three major signaling pathways, the calcium, the mitogen-activated protein kinase (MAPK) kinase and the nuclear factor-kappa-B (NF-kB) pathways, leading to the mobilization of transcription factors that are critical for gene expression and essential for T cell growth and differentiation. The T cell repertoire is generated in the thymus, by V-(D)-J rearrangement. This repertoire is then shaped by intrathymic selection events to generate a peripheral T cell pool of self-MH restricted, non-autoaggressive T cells. Post-thymic interaction of alpha-beta TR with the pMH complexes shapes TR structural and functional avidity. The chain is T cell receptor alpha variable 8-4 from Homo sapiens (Human).